A 284-amino-acid chain; its full sequence is Nucleotide-binding protein Sden_0486 (284 aa).

8-15 (GRSGSGKS) contacts ATP. 56–59 (DVRN) serves as a coordination point for GTP.

It belongs to the RapZ-like family.

Displays ATPase and GTPase activities. The chain is Nucleotide-binding protein Sden_0486 from Shewanella denitrificans (strain OS217 / ATCC BAA-1090 / DSM 15013).